A 246-amino-acid polypeptide reads, in one-letter code: Flavin-dependent thymidylate synthase (246 aa).

The ThyX domain occupies valine 17–asparagine 241. FAD-binding positions include serine 69, arginine 92–arginine 94, and glutamate 101. DUMP contacts are provided by residues glutamate 89–arginine 92, glutamate 101–arginine 105, and arginine 173. The short motif at arginine 92–serine 103 is the ThyX motif element. Residues asparagine 189–arginine 191 and histidine 195 contribute to the FAD site. Arginine 200 is a binding site for dUMP. Arginine 200 functions as the Involved in ionization of N3 of dUMP, leading to its activation in the catalytic mechanism.

Belongs to the thymidylate synthase ThyX family. Homotetramer. It depends on FAD as a cofactor.

The catalysed reaction is dUMP + (6R)-5,10-methylene-5,6,7,8-tetrahydrofolate + NADPH + H(+) = dTMP + (6S)-5,6,7,8-tetrahydrofolate + NADP(+). The protein operates within pyrimidine metabolism; dTTP biosynthesis. Its function is as follows. Catalyzes the reductive methylation of 2'-deoxyuridine-5'-monophosphate (dUMP) to 2'-deoxythymidine-5'-monophosphate (dTMP) while utilizing 5,10-methylenetetrahydrofolate (mTHF) as the methyl donor, and NADPH and FADH(2) as the reductant. This is Flavin-dependent thymidylate synthase from Streptomyces avermitilis (strain ATCC 31267 / DSM 46492 / JCM 5070 / NBRC 14893 / NCIMB 12804 / NRRL 8165 / MA-4680).